We begin with the raw amino-acid sequence, 148 residues long: Large ribosomal subunit protein bL9 (148 aa).

The protein belongs to the bacterial ribosomal protein bL9 family.

In terms of biological role, binds to the 23S rRNA. This is Large ribosomal subunit protein bL9 from Acidithiobacillus ferrooxidans (strain ATCC 23270 / DSM 14882 / CIP 104768 / NCIMB 8455) (Ferrobacillus ferrooxidans (strain ATCC 23270)).